A 360-amino-acid polypeptide reads, in one-letter code: UDP-N-acetylglucosamine--N-acetylmuramyl-(pentapeptide) pyrophosphoryl-undecaprenol N-acetylglucosamine transferase (360 aa).

Residues T11–G13, N120, R161, S188, and Q282 contribute to the UDP-N-acetyl-alpha-D-glucosamine site.

Belongs to the glycosyltransferase 28 family. MurG subfamily.

It is found in the cell inner membrane. It catalyses the reaction di-trans,octa-cis-undecaprenyl diphospho-N-acetyl-alpha-D-muramoyl-L-alanyl-D-glutamyl-meso-2,6-diaminopimeloyl-D-alanyl-D-alanine + UDP-N-acetyl-alpha-D-glucosamine = di-trans,octa-cis-undecaprenyl diphospho-[N-acetyl-alpha-D-glucosaminyl-(1-&gt;4)]-N-acetyl-alpha-D-muramoyl-L-alanyl-D-glutamyl-meso-2,6-diaminopimeloyl-D-alanyl-D-alanine + UDP + H(+). Its pathway is cell wall biogenesis; peptidoglycan biosynthesis. Functionally, cell wall formation. Catalyzes the transfer of a GlcNAc subunit on undecaprenyl-pyrophosphoryl-MurNAc-pentapeptide (lipid intermediate I) to form undecaprenyl-pyrophosphoryl-MurNAc-(pentapeptide)GlcNAc (lipid intermediate II). The protein is UDP-N-acetylglucosamine--N-acetylmuramyl-(pentapeptide) pyrophosphoryl-undecaprenol N-acetylglucosamine transferase of Synechococcus sp. (strain RCC307).